The primary structure comprises 306 residues: Voltage-dependent anion channel-forming protein RSc3414 (306 aa).

4 consecutive transmembrane segments (helical) span residues 28–48 (LFLIFCISLVAMAVHVHWLPI), 50–70 (VNLSTTPFSLIGIALAVFLGF), 213–233 (YSVMIHRTVYFFCAALPFGLV), and 239–259 (FTPVFSVFVAYAFMAHEAIAA).

It belongs to the anion channel-forming bestrophin (TC 1.A.46) family.

It is found in the cell membrane. The protein is Voltage-dependent anion channel-forming protein RSc3414 of Ralstonia nicotianae (strain ATCC BAA-1114 / GMI1000) (Ralstonia solanacearum).